A 70-amino-acid chain; its full sequence is MFGLGGQELILILLIILLLFGAKKLPELARGLGKGMKEFKKAQTEIEDEFNKVVDEPPRKTPENSTGSKS.

A helical membrane pass occupies residues 1–21 (MFGLGGQELILILLIILLLFG). Residues 50–62 (FNKVVDEPPRKTP) are compositionally biased toward basic and acidic residues. The disordered stretch occupies residues 50 to 70 (FNKVVDEPPRKTPENSTGSKS).

It belongs to the TatA/E family. In terms of assembly, forms a complex with TatC.

It is found in the cell inner membrane. Functionally, part of the twin-arginine translocation (Tat) system that transports large folded proteins containing a characteristic twin-arginine motif in their signal peptide across membranes. TatA could form the protein-conducting channel of the Tat system. The sequence is that of Sec-independent protein translocase protein TatA from Chlorobium limicola (strain DSM 245 / NBRC 103803 / 6330).